A 177-amino-acid chain; its full sequence is MTPISVILVTDNKLTRPKTMSTTREKLLRTTSRFVSTFGSFDIEEILSIRTPTCLYHQCCPSFNKNVVTNEETRANFPQFIATFKRFDFSIIEPDHTLVDEAARRVMIRAKASAESIVGAYENEYIFILKMTDDCRFIEEIYEFYDTIRLKDLQYRLEAKHISYGDAAPFKTRDTQL.

Belongs to the trt14 isomerase family. As to quaternary structure, homodimer.

It functions in the pathway secondary metabolite biosynthesis; terpenoid biosynthesis. Its function is as follows. Part of the gene cluster B that mediates the biosynthesis of austinol and dehydroaustinol, two fungal meroterpenoids. The first step of the pathway is the synthesis of 3,5-dimethylorsellinic acid by the polyketide synthase ausA. 3,5-dimethylorsellinic acid is then prenylated by the polyprenyl transferase ausN. Further epoxidation by the FAD-dependent monooxygenase ausM and cyclization by the probable terpene cyclase ausL lead to the formation of protoaustinoid A. Protoaustinoid A is then oxidized to spiro-lactone preaustinoid A3 by the combined action of the FAD-binding monooxygenases ausB and ausC, and the dioxygenase ausE. Acid-catalyzed keto-rearrangement and ring contraction of the tetraketide portion of preaustinoid A3 by ausJ lead to the formation of preaustinoid A4. The aldo-keto reductase ausK, with the help of ausH, is involved in the next step by transforming preaustinoid A4 into isoaustinone which is in turn hydroxylated by the P450 monooxygenase ausI to form austinolide. Finally, the cytochrome P450 monooxygenase ausG modifies austinolide to austinol. Austinol can be further modified to dehydroaustinol which forms a diffusible complex with diorcinol that initiates conidiation. Due to genetic rearrangements of the clusters and the subsequent loss of some enzymes, the end products of the Emericella nidulans austinoid biosynthesis clusters are austinol and dehydroaustinol, even if additional enzymes, such as the O-acetyltransferase ausQ and the cytochrome P450 monooxygenase ausR are still functional. This is Austinoid biosynthesis clusters protein F from Emericella nidulans (strain FGSC A4 / ATCC 38163 / CBS 112.46 / NRRL 194 / M139) (Aspergillus nidulans).